A 504-amino-acid chain; its full sequence is Protein DETOXIFICATION 38 (504 aa).

A run of 12 helical transmembrane segments spans residues 56 to 76 (LLLRLALPAILVYLINGGMGI), 90 to 110 (LAAASIGNSSFSLVYALMLGM), 139 to 159 (IVLALVGFPMTILYTFSYPIL), 170 to 190 (YMGSLYIAGLIPQIFAYAVYF), 208 to 228 (ISAAALVLQISLTWITVYAMG), 234 to 254 (IAYVLTISWWFIVGAQTFYVI), 273 to 295 (GLWSFFKLSAGSAVMICLELWYT), 316 to 336 (SICMSISALSFMVSVGFNAAV), 356 to 376 (TWTATFVSFVISVVEALVVIA), 401 to 421 (FLAVTIILNGIQPVLSGVAVG), 433 to 453 (IGCYYIVGIPIGCILGFTFNF), and 457 to 477 (GIWTGMIGGTLMQTLILLYVT).

It belongs to the multi antimicrobial extrusion (MATE) (TC 2.A.66.1) family.

The protein localises to the membrane. This chain is Protein DETOXIFICATION 38, found in Arabidopsis thaliana (Mouse-ear cress).